The following is a 950-amino-acid chain: UvrABC system protein A (950 aa).

Residue 36 to 43 coordinates ATP; it reads GKSGSGKS. The segment at 260–287 adopts a C4-type zinc-finger fold; that stretch reads CPLCGFSLPLIEPRLFSFNSPFGACSEC. 2 consecutive ABC transporter domains span residues 317–599 and 619–947; these read FKTS…KNSL and ADKG…MFLK. Residue 651 to 658 coordinates ATP; that stretch reads GVSGSGKS. The segment at 750–776 adopts a C4-type zinc-finger fold; that stretch reads CEKCQGDGYLNIQMHFLPDVFVPCDLC.

The protein belongs to the ABC transporter superfamily. UvrA family. As to quaternary structure, forms a heterotetramer with UvrB during the search for lesions.

Its subcellular location is the cytoplasm. Its function is as follows. The UvrABC repair system catalyzes the recognition and processing of DNA lesions. UvrA is an ATPase and a DNA-binding protein. A damage recognition complex composed of 2 UvrA and 2 UvrB subunits scans DNA for abnormalities. When the presence of a lesion has been verified by UvrB, the UvrA molecules dissociate. This is UvrABC system protein A from Borreliella burgdorferi (strain ATCC 35210 / DSM 4680 / CIP 102532 / B31) (Borrelia burgdorferi).